A 450-amino-acid polypeptide reads, in one-letter code: Chromosomal replication initiator protein DnaA (450 aa).

The interval 1–84 is domain I, interacts with DnaA modulators; that stretch reads MTENEQIFWN…AVDYVYEDNL (84 aa). The segment at 84–109 is domain II; it reads LMIEQQHQGQQGYTEQAFQQLPAVQS. The tract at residues 110–328 is domain III, AAA+ region; sequence DLNPKYSFDN…GALKDISLVA (219 aa). Residues glycine 154, glycine 156, lysine 157, and threonine 158 each contribute to the ATP site. The segment at 329 to 450 is domain IV, binds dsDNA; the sequence is NFKQIDTITV…EIETIKNKIK (122 aa).

This sequence belongs to the DnaA family. In terms of assembly, oligomerizes as a right-handed, spiral filament on DNA at oriC.

The protein localises to the cytoplasm. In terms of biological role, plays an essential role in the initiation and regulation of chromosomal replication. ATP-DnaA binds to the origin of replication (oriC) to initiate formation of the DNA replication initiation complex once per cell cycle. Binds the DnaA box (a 9 base pair repeat at the origin) and separates the double-stranded (ds)DNA. Forms a right-handed helical filament on oriC DNA; dsDNA binds to the exterior of the filament while single-stranded (ss)DNA is stabiized in the filament's interior. The ATP-DnaA-oriC complex binds and stabilizes one strand of the AT-rich DNA unwinding element (DUE), permitting loading of DNA polymerase. After initiation quickly degrades to an ADP-DnaA complex that is not apt for DNA replication. Binds acidic phospholipids. This Streptococcus equi subsp. zooepidemicus (strain H70) protein is Chromosomal replication initiator protein DnaA.